The sequence spans 274 residues: AA9 family lytic polysaccharide monooxygenase A (274 aa).

The signal sequence occupies residues 1-22 (MHVPQFISTGALLALLARPAAA). His-23 contacts Cu(2+). Cys-63 and Cys-194 are oxidised to a cystine. Positions 67, 98, and 100 each coordinate (1,4-beta-D-glucosyl)n. His-101 is a Cu(2+) binding site. His-174 lines the O2 pocket. Asp-177 is a binding site for (1,4-beta-D-glucosyl)n. Tyr-191 contributes to the Cu(2+) binding site.

The protein belongs to the polysaccharide monooxygenase AA9 family. Requires Cu(2+) as cofactor.

The protein localises to the secreted. It carries out the reaction [(1-&gt;4)-beta-D-glucosyl]n+m + reduced acceptor + O2 = 4-dehydro-beta-D-glucosyl-[(1-&gt;4)-beta-D-glucosyl]n-1 + [(1-&gt;4)-beta-D-glucosyl]m + acceptor + H2O.. Functionally, lytic polysaccharide monooxygenase (LPMO) that depolymerizes crystalline and amorphous polysaccharides via the oxidation of scissile alpha- or beta-(1-4)-glycosidic bonds, yielding C4 oxidation products. Catalysis by LPMOs requires the reduction of the active-site copper from Cu(II) to Cu(I) by a reducing agent and H(2)O(2) or O(2) as a cosubstrate. Cleaves a range of polysaccharides, including cellulose, xyloglucan, mixed-linkage glucan and glucomannan. The chain is AA9 family lytic polysaccharide monooxygenase A from Collariella virescens (Soil fungus).